The chain runs to 2474 residues: MEKVHVDLDADSPYVKLLQKCFPHFEIEATQVTDNDHANARAFSHLATKLIESEVDPDQVILDIGSAPVRHTHSKHKYHCICPMISAEDPDRLQRYADKLRKSDVTDRFIASKAADLLTVMSTPDVETPSLCMHTDSTCRYHGTVAVYQDVYAVHAPTSIYHQALKGVRTIYWIGFDTTPFMYKNMAGAYPTYNTNWADESVLEARNIGLCSSDLHEKRLGKISIMRKKKLQPTNKVVFSVGSTIYTEERILLRSWHLPNVFHLKGKTSFTGRCNTIVSCDGYVVKKITISPGIYGKVDNLASTLHREGFLSCKVTDTLRGERVSFPVCTYVPATLCDQMTGILATDVSVDDAQKLLVGLNQRIVVNGRTQRNTNTMQNYLLPVVAQAFSRWAREYRADLEDEKDLGVRERSLVMGCCWAFKTHKITSIYKKPGTQTIKKVPAVFNSFVIPQFNSYGLNIGLRRRIKMLLEEKRKPAPIITEADVAHLKGMQEEAEAVAEAEAVRAALPPLLPEVERETIEADIDLIMQEAGAGSVETPRRHIKVTTYPGEETIGSYAVLSPQAVLNSEKLACIHPLAEQVLVMTHKGRAGRYKVEPYHGRVVVPSGTAIPIPDFQALSESATIVYNEREFVNRYLHHIAINGGAINTDEEYYKVLRSSEADSEYVFDIDARKCVKKADAGPMCLVGELVDPPFHEFAYESLKTRPAAPHKVPTIGVYGVPGSGKSGIIKSAVTKRDLVVSAKKENCTEIIKDVKRMRGMDIAARTVDSVLLNGVKHPVDTLYIDEAFACHAGTLLALIAIVKPKKVVLCGDPKQCGFFNMMCLKVHFNHEICTEVYHKSISRRCTKTVTAIVSTLFYDKRMRTVNPCSDKIIIDTTSTTKPQRDDIILTCFRGWVKQLQIDYKNHEIMTAAASQGLTRKGVYAVRYKVNENPLYAQTSEHVNVLLTRTEKRIVWKTLAGDPWIKTLTAHYPGEFSATLEEWQAEHDAIMERILETPASSDVYQNKVHVCWAKALEPVLATANITLTRSQWETIPAFKDDKAFSPEMALNFLCTRFFGVDIDSGLFSAPTVPLTYTNEHWDNSPGPNRYGLCMRTAKELARRYPCILKAVDTGRLADVRTNTIKDYSPLINVVPLNRRLPHSLVVSHRYTGDGNYSQLLSKLIGKTVLVIGTPISVPGKRVETLGPGPQCTYKADLDLGIPSTIGKYDIIFVNVRTPYKHHHYQQCEDHAIHHSMLTRKAVDHLNKGGTCVALGYGTADRATENIISAVARSFRFSRVCQPKCAWENTEVAFVFFGKDNGNHLRDQDQLSIVLNNIYQGSTQYEAGRAPAYRVIRGDISKSTDEAIVNAANNKGQPGAGVCGALYKKWPGAFDKVPIATGTAHLVKHTPNIIHAVGPNFSRVSEVEGNQKLSEVYMDIAKIINRERYNKVSIPLLSTGIYAGGKDRVMQSLNHLFTAMDTTDADVTIYCLDKQWEARIKDAIARKESVEELVEDDKPVDIELVRVHPLSSLVGRPGYSTDEGKVHSYLEGTRFHQTAKDIAEIYAMWPNKQEANEQICLYVLGESMTSIRSKCPVEDSEASSPPHTIPCLCNYAMTAERVYRLRMAKNEQFAVCSSFQLPKYRITGVQKIQCNKPVIFSGVVPPAIHPRKFSAIEETVPVTIERLVPRRPAPPVPVPARIPSPRCSPAVSMQSLGGSSTSDVVISEAEVHDSDSDCSIPPMPFVVEAEVHASQGSHWSIPSASGFEIRELPEDRSISGSPTRTSVISDHSVNLITFDSVTDIFENFKQAPFQFLSEIRPIPAPRRRVGGFETDTKRYDKTEEKPIPKPRTRTTKYKQPPGVARSISEAELDEFIRRHSNXRYEAGAYIFSSETGQGHLQQKSTRQCKLQNPILERSVHEKFYAPRLDLEREKLLQKKLQLCASEGNRSRYQSRKVENMKAITAERLLQGIGAYLSAESQPVECYKVNYPVPIYSTTRSNRFSSADVAVRVCNLVLQENFPTVASYTITDEYDAYLDMVDGASCCLDTATFCPAKLRSFPKKHSYLRPEIRSAVPSPIQNTLQNVLAAATKRNCNVTQMRELPVLDSAAFNVECFKKYACNDEYWDTFKNNPIRLTTENVTQYVTKLKGPKAAALFAKTHNLQPLHEIPMDRFVMDLKRDVKVTPGTKHTEERPKVQVIQAAEPLATAYLCGIHRELVRRLNAVLLPNIHTLFDMSAEDFDAIIAEHFQFGDAVLETDIASFDKSEDDAIAMSALMILEDLGVDQALLDLIEAAFGNITSVHLPTGTRFKFGAMMKSGMFLTLFINTVVNIMIASRVLRERLTNSPCAAFIGDDNIVKGVKSDALMAERCATWLNMEVKIIDATVGVKAPYFCGGFIVVDQVTGTACRVADPLKRLFKLGKPLPLDDDQDGDRRRALYDEALRWNRIGITDELIKAVESRYEVFYISLVITALTTLAATVSNFKYIRGNPITLYG.

Residues 28–257 form the Alphavirus-like MT domain; that stretch reads EATQVTDNDH…EERILLRSWH (230 aa). The segment at 242–261 is nsP1 membrane-binding; that stretch reads GSTIYTEERILLRSWHLPNV. Cysteine 417 is lipidated: S-palmitoyl cysteine; by host. In terms of domain architecture, (+)RNA virus helicase ATP-binding spans 674–839; sequence CVKKADAGPM…HEICTEVYHK (166 aa). 719 to 726 lines the a ribonucleoside 5'-triphosphate pocket; that stretch reads GVPGSGKS. The 149-residue stretch at 840-988 folds into the (+)RNA virus helicase C-terminal domain; that stretch reads SISRRCTKTV…LEEWQAEHDA (149 aa). Positions 1001–1320 constitute a Peptidase C9 domain; that stretch reads DVYQNKVHVC…IVLNNIYQGS (320 aa). The interval 1002 to 1021 is nucleolus localization signal; that stretch reads VYQNKVHVCWAKALEPVLAT. Cysteine 1010 serves as the catalytic For cysteine protease nsP2 activity. The short motif at 1054–1063 is the Nuclear export signal element; that stretch reads TRFFGVDIDS. The For cysteine protease nsP2 activity role is filled by histidine 1079. The Nuclear localization signal signature appears at 1177–1181; that stretch reads PGKRV. The region spanning 1328–1486 is the Macro domain; that stretch reads APAYRVIRGD…RIKDAIARKE (159 aa). Positions 1337, 1351, 1359, 1438, 1439, and 1440 each coordinate ADP-D-ribose. Zn(2+) is bound by residues cysteine 1589, cysteine 1591, cysteine 1614, and cysteine 1632. The interval 1773-1785 is binding to host G3BP family members; sequence LITFDSVTDIFEN. The segment at 1820–1841 is disordered; it reads TEEKPIPKPRTRTTKYKQPPGV. The binding to host FXR family members stretch occupies residues 1838–1854; that stretch reads PPGVARSISEAELDEFI. The RdRp catalytic domain maps to 2231–2346; sequence DAVLETDIAS…KGVKSDALMA (116 aa).

As to quaternary structure, interacts with non-structural protein 3. Interacts with RNA-directed RNA polymerase nsP4. Interacts with protease nsP2. interacts with itself. Interacts with mRNA-capping enzyme nsP1. Interacts with host DDX1. Interacts with host DDX3. Interacts (via C-terminus) with host FXR1; this interaction inhibits the formation of host stress granules on viral mRNAs and the nsp3-FXR1 complexes bind viral RNAs and probably orchestrate the assembly of viral replication complexes. Interacts (via C-terminus) with host FXR2; this interaction inhibits the formation of host stress granules on viral mRNAs and the nsp3-FXR2 complexes bind viral RNAs and probably orchestrate the assembly of viral replication complexes. Interacts (via C-terminus) with host FMR1; this interaction inhibits the formation of host stress granules on viral mRNAs and the nsp3-FMR1 complexes bind viral RNAs and probably orchestrate the assembly of viral replication complexes. Interacts (via C-terminus) with host G3BP1; this interaction inhibits the formation of host stress granules on viral mRNAs and the nsp3-G3BP1 complexes bind viral RNAs and probably orchestrate the assembly of viral replication complexes. Interacts (via C-terminus) with host G3BP2; this interaction inhibits the formation of host stress granules on viral mRNAs and the nsp3-G3BP2 complexes bind viral RNAs and probably orchestrate the assembly of viral replication complexes. In terms of assembly, interacts with mRNA-capping enzyme nsP1. Interacts with protease nsP2. interacts with itself. As to quaternary structure, interacts with RNA-directed RNA polymerase nsP4. Interacts with mRNA-capping enzyme nsP1. Interacts with KPNA1/karyopherin-alpha1; this interaction probably allows the active transport of protease nsP2 into the host nucleus. Mg(2+) is required as a cofactor. Requires Mn(2+) as cofactor. Post-translationally, specific enzymatic cleavages in vivo yield mature proteins. The processing of the polyprotein is temporally regulated. In early stages (1.7 hpi), P1234 is first cleaved in trans through its nsP2 protease activity, releasing P123' and nsP4, which associate to form the early replication complex. At the same time, P1234 is also cut at the nsP1/nsP2 site early in infection but with lower efficiency. After replication of the viral minus-strand RNAs (4 hpi), the polyproteins are cut at the nsP1/nsP2 and nsP2/nsP3 sites very efficiently, preventing accumulation of P123' and P1234 and allowing the formation of the late replication complex. NsP3'/nsP4 site is not cleaved anymore and P34 is produced rather than nsP4. Specific enzymatic cleavages in vivo yield mature proteins. The processing of the polyprotein is temporally regulated. In early stages (1.7 hpi), P123 is cleaved at the nsP1/nsP2 site with low efficiency. After replication of the viral minus-strand RNAs (4 hpi), the polyproteins are cut at the nsP1/nsP2 and nsP2/nsP3 sites very efficiently, preventing accumulation of P123 and allowing the formation of the late replication complex. In terms of processing, specific enzymatic cleavages in vivo yield mature proteins. The processing of the polyprotein is temporally regulated. In early stages (1.7 hpi), P123' is cleaved at the nsP1/nsP2 site with low efficiency. After replication of the viral minus-strand RNAs (4 hpi), the polyproteins are cut at the nsP1/nsP2 and nsP2/nsP3 sites very efficiently, preventing accumulation of P123' and allowing the formation of the late replication complex. Post-translationally, palmitoylated by host palmitoyltransferases ZDHHC2 and ZDHHC19. Phosphorylated by host on serines and threonines. In terms of processing, ubiquitinated; targets the protein for rapid degradation via the ubiquitin system. Nsp4 is present in extremely low quantities due to low frequency of translation through the amber stop-codon and the degradation by the ubiquitin pathway.

The protein localises to the host cytoplasmic vesicle membrane. The protein resides in the host cell membrane. It localises to the host cell projection. It is found in the host filopodium. Its subcellular location is the host nucleus. The protein localises to the host cytoplasm. It catalyses the reaction GTP + S-adenosyl-L-methionine = N(7)-methyl-GTP + S-adenosyl-L-homocysteine. The catalysed reaction is N(7)-methyl-GTP + L-histidyl-[protein] = N(tele)-(N(7)-methylguanosine 5'-phospho)-L-histidyl-[protein] + diphosphate. It carries out the reaction N(tele)-(N(7)-methylguanosine 5'-phospho)-L-histidyl-[protein] + a 5'-end diphospho-(purine-ribonucleoside) in mRNA + H(+) = a 5'-end (N(7)-methyl 5'-triphosphoguanosine)-(purine-ribonucleoside) in mRNA + L-histidyl-[protein]. The enzyme catalyses a 5'-end triphospho-ribonucleoside in mRNA + H2O = a 5'-end diphospho-ribonucleoside in mRNA + phosphate + H(+). It catalyses the reaction a ribonucleoside 5'-triphosphate + H2O = a ribonucleoside 5'-diphosphate + phosphate + H(+). The catalysed reaction is ATP + H2O = ADP + phosphate + H(+). It carries out the reaction RNA(n) + a ribonucleoside 5'-triphosphate = RNA(n+1) + diphosphate. The enzyme catalyses 4-O-(ADP-D-ribosyl)-L-aspartyl-[protein] + H2O = L-aspartyl-[protein] + ADP-D-ribose + H(+). It catalyses the reaction 5-O-(ADP-D-ribosyl)-L-glutamyl-[protein] + H2O = L-glutamyl-[protein] + ADP-D-ribose + H(+). The catalysed reaction is RNA(n) + ATP = RNA(n)-3'-adenine ribonucleotide + diphosphate. It carries out the reaction ADP-alpha-D-ribose 1''-phosphate + H2O = ADP-D-ribose + phosphate. With respect to regulation, inhibited by sinefungin. Functionally, inactive precursor of the viral replicase, which is activated by cleavages carried out by the viral protease nsP2. Its function is as follows. The early replication complex formed by the polyprotein P123 and nsP4 synthesizes the minus-strand RNAs (antigenome). Polyprotein P123 is a short-lived polyprotein that accumulates during early stage of infection. As soon P123 is cleaved into mature proteins, the plus-strand RNAs synthesis begins. The early replication complex formed by the polyprotein P123' and nsP4 synthesizes minus-strand RNAs (antigenome). Polyprotein P123' is a short-lived polyprotein that accumulates during early stage of infection. As soon P123' is cleaved into mature proteins, the plus-strand RNAs synthesis begins. In terms of biological role, cytoplasmic capping enzyme that catalyzes two virus-specific reactions: methyltransferase and nsP1 guanylyltransferase. mRNA-capping is necessary since all viral RNAs are synthesized in the cytoplasm, and host capping enzymes are restricted to the nucleus. The enzymatic reaction involves a covalent link between 7-methyl-GMP and nsP1, whereas eukaryotic capping enzymes form a covalent complex only with GMP. NsP1 capping consists in the following reactions: GTP is first methylated into 7-methyl-GMP and then is covalently linked to nsP1 to form the m7GMp-nsP1 complex from which 7-methyl-GMP complex is transferred to the mRNA to create the cap structure. NsP1 is also needed for the initiation of the minus-strand RNAs synthesis. Probably serves as a membrane anchor for the replication complex composed of nsP1-nsP4. Nsp1 is needed for the initiation of the minus-strand RNAs synthesis. Palmitoylated nsP1 is remodeling host cell cytoskeleton, and induces filopodium-like structure formation at the surface of the host cell. Functionally, multifunctional protein whose N-terminus is part of the RNA polymerase complex and displays NTPase, RNA triphosphatase and helicase activities. NTPase and RNA triphosphatase are involved in viral RNA capping and helicase keeps a check on the dsRNA replication intermediates. The C-terminus harbors a protease that specifically cleaves the polyproteins and releases the mature proteins. Required for the shutoff of minus-strand RNAs synthesis. Inhibits host translation to ensure maximal viral gene expression and evade host immune response. Its function is as follows. Seems to be essential for minus-strand RNAs and subgenomic 26S mRNAs synthesis. Displays mono-ADP-ribosylhydrolase activity. ADP-ribosylation is a post-translational modification that controls various processes of the host cell and the virus probably needs to revert it for optimal viral replication. Binds proteins of FXR and G3BP families and sequesters them into the viral RNA replication complexes thereby inhibiting the formation of host stress granules on viral mRNAs. The nsp3-FXR and nsp3-G3BP complexes bind viral RNAs and probably orchestrate the assembly of viral replication complexes, thanks to the ability of G3BP and FXR family members to self-assemble and bind DNA. Seems to be essential for minus-strand RNAs and subgenomic 26S mRNAs synthesis. Displays mono-ADP-ribosylhydrolase activity. ADP-ribosylation is a post-translational modification that controls various processes of the host cell and the virus probably needs to revert it for optimal viral replication. Binds proteins of FXR and G3BP families and sequesters them into the viral RNA replication complexes thereby inhibiting the formation of host stress granules on viral mRNAs. The nsp3'-FXR and nsp3-G3BP complexes bind viral RNAs and probably orchestrate the assembly of viral replication complexes, thanks to the ability of G3BP and FXR family members to self-assemble and bind DNA. In terms of biological role, RNA dependent RNA polymerase. Replicates genomic and antigenomic RNA by recognizing replications specific signals. The early replication complex formed by the polyprotein P123 and nsP4 synthesizes minus-strand RNAs. The late replication complex composed of fully processed nsP1-nsP4 is responsible for the production of genomic and subgenomic plus-strand RNAs. This chain is Polyprotein P1234, found in Eastern equine encephalitis virus (strain PE-3.0815) (EEEV).